Consider the following 543-residue polypeptide: Probable bifunctional tRNA threonylcarbamoyladenosine biosynthesis protein (543 aa).

The tract at residues 1–329 (MDISKDLICI…YRSDMVEVNW (329 aa)) is kae1. His112, His116, and Tyr133 together coordinate Fe cation. L-threonylcarbamoyladenylate contacts are provided by residues 133–137 (YVSGG), Asp165, Gly178, Glu182, and Asn262. Asp290 serves as a coordination point for Fe cation. In terms of domain architecture, Protein kinase spans 342–543 (IIPEHLIGKG…KEVEKRARYL (202 aa)). ATP-binding positions include 348–356 (IGKGAEADI) and Lys369. The Proton acceptor; for kinase activity role is filled by Asp461.

In the N-terminal section; belongs to the KAE1 / TsaD family. It in the C-terminal section; belongs to the protein kinase superfamily. Tyr protein kinase family. BUD32 subfamily. Component of the KEOPS complex that consists of Kae1, Bud32, Cgi121 and Pcc1; the whole complex dimerizes. Requires Fe(2+) as cofactor.

It is found in the cytoplasm. It carries out the reaction L-seryl-[protein] + ATP = O-phospho-L-seryl-[protein] + ADP + H(+). The enzyme catalyses L-threonyl-[protein] + ATP = O-phospho-L-threonyl-[protein] + ADP + H(+). The catalysed reaction is L-threonylcarbamoyladenylate + adenosine(37) in tRNA = N(6)-L-threonylcarbamoyladenosine(37) in tRNA + AMP + H(+). In terms of biological role, required for the formation of a threonylcarbamoyl group on adenosine at position 37 (t(6)A37) in tRNAs that read codons beginning with adenine. Is a component of the KEOPS complex that is probably involved in the transfer of the threonylcarbamoyl moiety of threonylcarbamoyl-AMP (TC-AMP) to the N6 group of A37. The Kae1 domain likely plays a direct catalytic role in this reaction. The Bud32 domain probably displays kinase activity that regulates Kae1 function. This is Probable bifunctional tRNA threonylcarbamoyladenosine biosynthesis protein from Methanococcus maripaludis (strain C6 / ATCC BAA-1332).